The primary structure comprises 339 residues: 5-dehydro-2-deoxygluconokinase (339 aa).

Belongs to the carbohydrate kinase PfkB family.

It catalyses the reaction 5-dehydro-2-deoxy-D-gluconate + ATP = 6-phospho-5-dehydro-2-deoxy-D-gluconate + ADP + H(+). The protein operates within polyol metabolism; myo-inositol degradation into acetyl-CoA; acetyl-CoA from myo-inositol: step 5/7. Catalyzes the phosphorylation of 5-dehydro-2-deoxy-D-gluconate (2-deoxy-5-keto-D-gluconate or DKG) to 6-phospho-5-dehydro-2-deoxy-D-gluconate (DKGP). This is 5-dehydro-2-deoxygluconokinase from Clostridium tetani (strain Massachusetts / E88).